A 1343-amino-acid chain; its full sequence is DNA-directed RNA polymerase subunit beta (1343 aa).

This sequence belongs to the RNA polymerase beta chain family. In terms of assembly, the RNAP catalytic core consists of 2 alpha, 1 beta, 1 beta' and 1 omega subunit. When a sigma factor is associated with the core the holoenzyme is formed, which can initiate transcription.

The catalysed reaction is RNA(n) + a ribonucleoside 5'-triphosphate = RNA(n+1) + diphosphate. In terms of biological role, DNA-dependent RNA polymerase catalyzes the transcription of DNA into RNA using the four ribonucleoside triphosphates as substrates. This is DNA-directed RNA polymerase subunit beta from Shewanella piezotolerans (strain WP3 / JCM 13877).